The following is a 344-amino-acid chain: Uroporphyrinogen decarboxylase (344 aa).

Substrate-binding positions include 25 to 29 (RQAGR), Asp75, Tyr152, Ser207, and His323.

This sequence belongs to the uroporphyrinogen decarboxylase family. As to quaternary structure, homodimer.

The protein resides in the cytoplasm. The enzyme catalyses uroporphyrinogen III + 4 H(+) = coproporphyrinogen III + 4 CO2. The protein operates within porphyrin-containing compound metabolism; protoporphyrin-IX biosynthesis; coproporphyrinogen-III from 5-aminolevulinate: step 4/4. Catalyzes the decarboxylation of four acetate groups of uroporphyrinogen-III to yield coproporphyrinogen-III. The protein is Uroporphyrinogen decarboxylase of Roseobacter denitrificans (strain ATCC 33942 / OCh 114) (Erythrobacter sp. (strain OCh 114)).